A 344-amino-acid chain; its full sequence is tRNA N6-adenosine threonylcarbamoyltransferase (344 aa).

The Fe cation site is built by His-110 and His-114. Residues 133-137, Asp-166, Gly-179, and Asn-278 contribute to the substrate site; that span reads VVSGA. Asp-303 serves as a coordination point for Fe cation.

This sequence belongs to the KAE1 / TsaD family. Fe(2+) serves as cofactor.

It localises to the cytoplasm. The enzyme catalyses L-threonylcarbamoyladenylate + adenosine(37) in tRNA = N(6)-L-threonylcarbamoyladenosine(37) in tRNA + AMP + H(+). Its function is as follows. Required for the formation of a threonylcarbamoyl group on adenosine at position 37 (t(6)A37) in tRNAs that read codons beginning with adenine. Is involved in the transfer of the threonylcarbamoyl moiety of threonylcarbamoyl-AMP (TC-AMP) to the N6 group of A37, together with TsaE and TsaB. TsaD likely plays a direct catalytic role in this reaction. This chain is tRNA N6-adenosine threonylcarbamoyltransferase, found in Chlamydia pneumoniae (Chlamydophila pneumoniae).